The chain runs to 158 residues: SsrA-binding protein (158 aa).

A disordered region spans residues 130–158 (KGKKNHDKREAQAKRDWSRQKQRLLKDHG). Over residues 136–158 (DKREAQAKRDWSRQKQRLLKDHG) the composition is skewed to basic and acidic residues.

The protein belongs to the SmpB family.

The protein localises to the cytoplasm. In terms of biological role, required for rescue of stalled ribosomes mediated by trans-translation. Binds to transfer-messenger RNA (tmRNA), required for stable association of tmRNA with ribosomes. tmRNA and SmpB together mimic tRNA shape, replacing the anticodon stem-loop with SmpB. tmRNA is encoded by the ssrA gene; the 2 termini fold to resemble tRNA(Ala) and it encodes a 'tag peptide', a short internal open reading frame. During trans-translation Ala-aminoacylated tmRNA acts like a tRNA, entering the A-site of stalled ribosomes, displacing the stalled mRNA. The ribosome then switches to translate the ORF on the tmRNA; the nascent peptide is terminated with the 'tag peptide' encoded by the tmRNA and targeted for degradation. The ribosome is freed to recommence translation, which seems to be the essential function of trans-translation. The chain is SsrA-binding protein from Ruegeria sp. (strain TM1040) (Silicibacter sp.).